Consider the following 197-residue polypeptide: Protein jagunal (197 aa).

Residues 1–39 lie on the Cytoplasmic side of the membrane; the sequence is MATRGGPMVAGTDGNDFEFRQRVAGTYQISLLNKSRLKY. The chain crosses the membrane as a helical span at residues 40 to 60; it reads CIFFHALLFFVMLAKLTSDIL. Topologically, residues 61-78 are lumenal; sequence DRLDIFVLEIEELEVPSP. Residues 79–99 form a helical membrane-spanning segment; it reads LWWEYVWAGSLLTSFLGLSAA. At 100-109 the chain is on the cytoplasmic side; that stretch reads RGNKVREMQK. Residues 110 to 130 traverse the membrane as a helical segment; that stretch reads YMIAILVFAILPLLYCFAYYF. Residues 131-159 lie on the Lumenal side of the membrane; it reads SDVWEFATMDKSVELDETDIFIWRGYPYG. A helical transmembrane segment spans residues 160–180; the sequence is VFWYAFCFVGFQVHGFTLYFA. The Cytoplasmic segment spans residues 181–197; the sequence is YNLVKVWKARTATRKFQ.

The protein belongs to the jagunal family.

Its subcellular location is the endoplasmic reticulum membrane. Its function is as follows. Required for endoplasmic reticulum organization and proper vesicular traffic during vitellogenesis. Required for oocyte and bristle growth. The chain is Protein jagunal from Drosophila pseudoobscura pseudoobscura (Fruit fly).